We begin with the raw amino-acid sequence, 470 residues long: TNF receptor-associated factor 4 (470 aa).

The RING-type zinc-finger motif lies at 18-58 (CPLCGKPMREPVQVSTCGHRFCDTCLQEFLSEGVFKCPEDQ). 3 TRAF-type zinc fingers span residues 101 to 154 (GHLN…EAYE), 155 to 208 (SHEG…DTIQ), and 209 to 267 (SHQY…LAMG). K263 participates in a covalent cross-link: Glycyl lysine isopeptide (Lys-Gly) (interchain with G-Cter in ubiquitin). Positions 277–310 (HLAMMCALVSRQRQELQELRRELEELSIGSDGVL) form a coiled coil. Residues 307 to 462 (DGVLIWKIGS…DDAVFIRASV (156 aa)) enclose the MATH domain. S426 carries the phosphoserine modification.

The protein belongs to the TNF receptor-associated factor family. B subfamily. Homotrimer. Interacts with LTBR/TNFRSF3, NGFR/TNFRSF16, RPS6KB1 and TGFB1I1. Interacts with SMURF1. Interacts (via TRAF domain) with MAP3K4 (via kinase domain). Interacts with NCF1, TICAM1, IRAK1 and TRAF6, and is probably part of a complex containing TRAF4, NCF1, TICAM1, IRAK1 and TRAF6. Interacts (via MATH domain) with GP6 and GP1BB. Interacts with EGFR (via C-terminal region); this interaction promotes the formation of EGFR asymmetric dimers. Interacts with PKM; this interaction promotes PKM kinase activity. Post-translationally, polyubiquitinated, leading to its proteasomal degradation. Ubiquitinated at Lys-263 by the SCF(FBXL2) complex, leading to its degradation by the proteasome. In terms of tissue distribution, predominantly expressed in brain. Preferentially expressed by postmitotic undifferentiated neurons in developing central (CNS) and peripheral (PNS) nervous system, and in nervous tissues of sensory organs. In the embryo, protein expression was shown in brain, thymus, salivary glands and intestine. In the adult, protein expression is restricted to the brain (hippocampus and olfactory bulb).

The protein resides in the cytoplasm. It is found in the nucleus. Its subcellular location is the perinuclear region. The protein localises to the cell junction. It localises to the tight junction. The protein resides in the cell membrane. It is found in the cytoskeleton. The enzyme catalyses S-ubiquitinyl-[E2 ubiquitin-conjugating enzyme]-L-cysteine + [acceptor protein]-L-lysine = [E2 ubiquitin-conjugating enzyme]-L-cysteine + N(6)-ubiquitinyl-[acceptor protein]-L-lysine.. The protein operates within protein degradation; proteasomal ubiquitin-dependent pathway. In terms of biological role, adapter protein with E3 ligase activity that is involved in many diverse biological processes including cell proliferation, migration, differentiation, DNA repair, platelet activation or apoptosis. Promotes EGFR-mediated signaling by facilitating the dimerization of EGFR and downstream AKT activation thereby promoting cell proliferation. Ubiquitinates SMURF2 through 'Lys-48'-linked ubiquitin chain leading to SMURF2 degradation through the proteasome and subsequently osteogenic differentiation. Promotes 'Lys-63'-mediated ubiquitination of CHK1 which in turn activates cell cycle arrest and activation of DNA repair. In addition, promotes an atypical 'Lys-29'-linked ubiquitination at the C-terminal end of IRS1 which is crucial for insulin-like growth factor (IGF) signal transduction. Regulates activation of NF-kappa-B in response to signaling through Toll-like receptors. Required for normal skeleton development, and for normal development of the respiratory tract. Required for activation of RPS6KB1 in response to TNF signaling. Modulates TRAF6 functions. Inhibits adipogenic differentiation by activating pyruvate kinase PKM activity and subsequently the beta-catenin signaling pathway. This is TNF receptor-associated factor 4 (Traf4) from Mus musculus (Mouse).